A 373-amino-acid polypeptide reads, in one-letter code: Forkhead box protein F1 (373 aa).

The segment at 1 to 51 (MTAEIQQPPSQPPAQSSPMSAATDKHGGQPSVMESANCATKTKKTNAGIRR) is disordered. The span at 13–22 (PAQSSPMSAA) shows a compositional bias: low complexity. The fork-head DNA-binding region spans 54–148 (KPPYSYIALI…EEGSFRRRPR (95 aa)). Disordered stretches follow at residues 236–255 (GSSGGDYSHHDSGSPLLGGG) and 283–306 (QPLSPCNSAANPLSSSLSSHSLDQ). The span at 286-306 (SPCNSAANPLSSSLSSHSLDQ) shows a compositional bias: low complexity.

The protein localises to the nucleus. In terms of biological role, probable transcription factor. Required for smooth muscle (visceral mesoderm) differentiation during gut development. Also required for normal proliferation of the lateral plate mesoderm. Acts as a downstream mediator of bmp4-signaling. In Xenopus tropicalis (Western clawed frog), this protein is Forkhead box protein F1.